Here is a 210-residue protein sequence, read N- to C-terminus: Na(+)-translocating NADH-quinone reductase subunit D (210 aa).

A run of 5 helical transmembrane segments spans residues 42–62, 72–92, 103–123, 131–151, and 178–198; these read FVMTLAVTAVTAFSNLFISLI, IIAQMAVIASLVIVVDQVLKA, VFVGLIITNCIVMGRAEAYAM, FLDGIGNGLGYGAVLLTVATV, and NGLLLLPPSAFFIIGLIIWGV.

This sequence belongs to the NqrDE/RnfAE family. In terms of assembly, composed of six subunits; NqrA, NqrB, NqrC, NqrD, NqrE and NqrF.

It is found in the cell inner membrane. The catalysed reaction is a ubiquinone + n Na(+)(in) + NADH + H(+) = a ubiquinol + n Na(+)(out) + NAD(+). Its function is as follows. NQR complex catalyzes the reduction of ubiquinone-1 to ubiquinol by two successive reactions, coupled with the transport of Na(+) ions from the cytoplasm to the periplasm. NqrA to NqrE are probably involved in the second step, the conversion of ubisemiquinone to ubiquinol. This chain is Na(+)-translocating NADH-quinone reductase subunit D, found in Aeromonas salmonicida (strain A449).